Here is a 109-residue protein sequence, read N- to C-terminus: Parvalbumin beta (109 aa).

The residue at position 2 (Ala-2) is an N-acetylalanine. The tract at residues 22–41 (AGSFDHKKFFKACGLSGKST) is igE-binding. EF-hand domains lie at 39–74 (KSTDEVKKAFAIIDQDKSGFIEEEELKLFLQNFKAG) and 78–109 (LSDAETKAFLKAGDSDGDGKIGIDEFAAMIKG). Positions 52, 54, 56, 58, 60, 63, 91, 93, 95, 97, and 102 each coordinate Ca(2+).

This sequence belongs to the parvalbumin family. In terms of processing, the N-terminus is blocked. Expressed in both white and dark muscles (at protein level). About eight and a half times lower expression in the dark muscle than in the white muscle (at protein level).

In terms of biological role, in muscle, parvalbumin is thought to be involved in relaxation after contraction. It binds two calcium ions. This Scomber japonicus (Chub mackerel) protein is Parvalbumin beta.